Here is a 327-residue protein sequence, read N- to C-terminus: Endo-1,4-beta-xylanase A (327 aa).

In terms of domain architecture, GH10 spans 1–323; that stretch reads AASGLEAAMK…KPSYTSTLNT (323 aa). A disulfide bond links C81 and C123. N-linked (GlcNAc...) asparagine glycosylation is present at N101. E131 acts as the Proton donor in catalysis. E245 acts as the Nucleophile in catalysis. A disulfide bond links C273 and C279.

This sequence belongs to the glycosyl hydrolase 10 (cellulase F) family. In terms of assembly, monomer.

It localises to the secreted. The protein resides in the extracellular space. The enzyme catalyses Endohydrolysis of (1-&gt;4)-beta-D-xylosidic linkages in xylans.. It participates in glycan degradation; xylan degradation. Catalyzes the hydrolysis of the internal glycosidic bonds in heteroxylans, releasing mainly xylobiose and xylotriose. Most active on oat-spelt xylan. The sequence is that of Endo-1,4-beta-xylanase A from Fusarium oxysporum f. sp. lycopersici (strain 4287 / CBS 123668 / FGSC 9935 / NRRL 34936) (Fusarium vascular wilt of tomato).